We begin with the raw amino-acid sequence, 540 residues long: Cytochrome P450 monooxygenase CYP3 (540 aa).

Residue asparagine 2 is glycosylated (N-linked (GlcNAc...) asparagine). Residues 26–46 form a helical membrane-spanning segment; sequence IFGLSSSTLVVLVAMIAVSTL. N-linked (GlcNAc...) asparagine glycosylation is found at asparagine 100, asparagine 210, and asparagine 400. Residue cysteine 471 coordinates heme.

Belongs to the cytochrome P450 family. Heme is required as a cofactor.

The protein localises to the membrane. It participates in secondary metabolite biosynthesis. Functionally, cytochrome P450 monooxygenase; part of the gene cluster that mediates the biosynthesis of itaconic acid and 2-hydroxyparaconate. Cis-aconitate is secreted by the mitochondrial tricarboxylate transporter MTT1. In the cytosol cis-aconitate is converted into trans-aconitate via isomerization by the aconitate-delta-isomerase ADI1. Decarboxylation of trans-aconitate by the trans-aconitate decarboxylase TAD1 then leads then to the production of itaconic acid. The cytochrome P450 monooxygenase CYP3 further converts itaconate to 2-hydroxyparaconate via oxidation of the double bond, leading to a transient epoxide, which can subsequently be lactonized to produce 2-hydroxyparaconate. Secretion of itaconate and possibly 2-hydroxyparaconate into the medium is mediated by the major facilitator ITP1. The glyoxalase domain-containing protein RDO1 is not involved in the biosynthesis of itaconate and 2-hydroxyparaconate, however, it might play a role in the further conversion of 2-hydroxyparaconate to itatartarate. The polypeptide is Cytochrome P450 monooxygenase CYP3 (Mycosarcoma maydis (Corn smut fungus)).